The chain runs to 250 residues: Flavin-dependent thymidylate synthase (250 aa).

The ThyX domain occupies 7–233 (LRVQLIAKTE…PQVFSDFEIT (227 aa)). FAD contacts are provided by residues Ser-71, 95–97 (RHR), and Gln-103. DUMP contacts are provided by residues 92 to 95 (ELIR), 103 to 107 (QLSQR), and Arg-172. The ThyX motif motif lies at 95–105 (RHRHFSYSQLS). FAD is bound by residues 188–190 (NYR) and His-194. Arg-199 is a dUMP binding site. Catalysis depends on Arg-199, which acts as the Involved in ionization of N3 of dUMP, leading to its activation.

This sequence belongs to the thymidylate synthase ThyX family. As to quaternary structure, homotetramer. It depends on FAD as a cofactor.

It catalyses the reaction dUMP + (6R)-5,10-methylene-5,6,7,8-tetrahydrofolate + NADPH + H(+) = dTMP + (6S)-5,6,7,8-tetrahydrofolate + NADP(+). The protein operates within pyrimidine metabolism; dTTP biosynthesis. Its function is as follows. Catalyzes the reductive methylation of 2'-deoxyuridine-5'-monophosphate (dUMP) to 2'-deoxythymidine-5'-monophosphate (dTMP) while utilizing 5,10-methylenetetrahydrofolate (mTHF) as the methyl donor, and NADPH and FADH(2) as the reductant. The protein is Flavin-dependent thymidylate synthase of Mycolicibacterium gilvum (strain PYR-GCK) (Mycobacterium gilvum (strain PYR-GCK)).